The sequence spans 564 residues: Dihydropyrimidinase-related protein 5 (564 aa).

Phosphothreonine is present on residues Thr-509 and Thr-514. Phosphoserine is present on residues Ser-532 and Ser-538. Arg-559 is subject to Omega-N-methylarginine.

It belongs to the metallo-dependent hydrolases superfamily. Hydantoinase/dihydropyrimidinase family. As to quaternary structure, homotetramer, and heterotetramer with other DPYS-like proteins. Interacts with DPYSL2, DPYSL3 and DPYSL4. Interacts with SEPTIN4 isoform 4. Interacts with MAP2 and TUBB3. Detected in brain.

It is found in the cytoplasm. Functionally, involved in the negative regulation of dendrite outgrowth. The protein is Dihydropyrimidinase-related protein 5 (Dpysl5) of Mus musculus (Mouse).